Here is a 361-residue protein sequence, read N- to C-terminus: sn-glycerol-3-phosphate import ATP-binding protein UgpC (361 aa).

An ABC transporter domain is found at 4–235 (LSLKGIRKSY…PETVFVAGFI (232 aa)). Residue 37-44 (GPSGCGKS) participates in ATP binding.

The protein belongs to the ABC transporter superfamily. sn-glycerol-3-phosphate importer (TC 3.A.1.1.3) family. In terms of assembly, the complex is composed of two ATP-binding proteins (UgpC), two transmembrane proteins (UgpA and UgpE) and a solute-binding protein (UgpB).

The protein localises to the cell inner membrane. The catalysed reaction is sn-glycerol 3-phosphate(out) + ATP + H2O = sn-glycerol 3-phosphate(in) + ADP + phosphate + H(+). In terms of biological role, part of the ABC transporter complex UgpBAEC involved in sn-glycerol-3-phosphate (G3P) import. Responsible for energy coupling to the transport system. The chain is sn-glycerol-3-phosphate import ATP-binding protein UgpC from Burkholderia ambifaria (strain ATCC BAA-244 / DSM 16087 / CCUG 44356 / LMG 19182 / AMMD) (Burkholderia cepacia (strain AMMD)).